A 576-amino-acid polypeptide reads, in one-letter code: MAGUK p55 subfamily member 7 (576 aa).

L27 domains lie at 10 to 64 (CDMG…EKQN) and 65 to 122 (PLPI…YDPV). The PDZ domain maps to 139 to 220 (IIRLVKNSEP…AITFKIIPST (82 aa)). The SH3 domain occupies 228–298 (EGKIFIKALF…PSKHFQERRL (71 aa)). The segment at 289–383 (PSKHFQERRL…VGPVGVGLNE (95 aa)) is phospho-regulated basic and hydrophobic (PRBH) motif. Positions 368–560 (YRLIVLVGPV…AFNELKTTFD (193 aa)) constitute a Guanylate kinase-like domain. Position 409 is a phosphoserine (Ser-409).

It belongs to the MAGUK family. In terms of assembly, heterodimer; able to heterodimerize via its C-terminal L27 domain with LIN7A, LIN7B and LIN7C. Forms a tripartite complex composed of DLG1, MPP7 and LIN7 (LIN7A or LIN7C). Interacts with DLG1 via its N-terminal L27 domain. Interacts with PALS1 and PATJ. Phosphorylated by aPKC which promotes dissociation from the cell cortex.

The protein localises to the membrane. Its subcellular location is the lateral cell membrane. It is found in the cell junction. The protein resides in the tight junction. It localises to the adherens junction. The protein localises to the cytoplasm. Its subcellular location is the cell cortex. Functionally, acts as an important adapter that promotes epithelial cell polarity and tight junction formation via its interaction with DLG1. Involved in the assembly of protein complexes at sites of cell-cell contact. In Mus musculus (Mouse), this protein is MAGUK p55 subfamily member 7 (Mpp7).